We begin with the raw amino-acid sequence, 198 residues long: Guanylate kinase (198 aa).

The 183-residue stretch at 4-186 (PRPVVLSGPS…AYATLKQALS (183 aa)) folds into the Guanylate kinase-like domain. Position 14-19 (14-19 (GAGKST)) interacts with ATP. 37–51 (SHTTRNPRPGEEDGK) is a binding site for substrate. Residues Arg-44, Arg-137, and Arg-148 contribute to the active site. 171-172 (ND) provides a ligand contact to ATP.

Belongs to the guanylate kinase family. As to quaternary structure, monomer. Interacts with RD3. Widely expressed. In retina is expressed in inner segment, outer nuclear layer, outer plexiform layer, inner plexiform layer, and ganglion cell layer (at protein level).

The protein resides in the photoreceptor inner segment. The protein localises to the cytoplasm. It localises to the cytosol. It is found in the mitochondrion. It catalyses the reaction GMP + ATP = GDP + ADP. Its function is as follows. Catalyzes the phosphorylation of GMP to GDP. Essential enzyme for recycling GMP and indirectly, cyclic GMP (cGMP). Involved in the cGMP metabolism in photoreceptors. In Mus musculus (Mouse), this protein is Guanylate kinase.